Consider the following 75-residue polypeptide: Protein RALF-like 9 (75 aa).

Positions 1–28 are cleaved as a signal peptide; sequence MGMSKSIKVILSLALVVFLALAATKVEA. Disulfide bonds link C46-C54 and C66-C72.

Belongs to the plant rapid alkalinization factor (RALF) family.

Its subcellular location is the secreted. Its function is as follows. Cell signaling peptide that may regulate plant stress, growth, and development. Mediates a rapid alkalinization of extracellular space by mediating a transient increase in the cytoplasmic Ca(2+) concentration leading to a calcium-dependent signaling events through a cell surface receptor and a concomitant activation of some intracellular mitogen-activated protein kinases. The chain is Protein RALF-like 9 (RALFL9) from Arabidopsis thaliana (Mouse-ear cress).